A 349-amino-acid chain; its full sequence is UPF0283 membrane protein Ent638_2153 (349 aa).

The next 3 membrane-spanning stretches (helical) occupy residues 70-90 (MVTA…VQWT), 99-119 (WVAL…VGSV), and 213-233 (ESTL…FIAW).

This sequence belongs to the UPF0283 family.

It is found in the cell inner membrane. This Enterobacter sp. (strain 638) protein is UPF0283 membrane protein Ent638_2153.